The chain runs to 328 residues: Urokinase plasminogen activator surface receptor (328 aa).

An N-terminal signal peptide occupies residues Met1–Gly24. 3 consecutive UPAR/Ly6 domains span residues Leu25 to Leu118, Leu118 to Gly213, and Phe214 to Gly299. 3 disulfides stabilise this stretch: Cys27–Cys48, Cys30–Cys36, and Cys41–Cys69. Residue Asn76 is glycosylated (N-linked (GlcNAc...) asparagine). Disulfide bonds link Cys95/Cys100, Cys120/Cys147, Cys123/Cys130, Cys140/Cys169, Cys175/Cys192, Cys193/Cys198, Cys216/Cys244, Cys219/Cys227, Cys237/Cys263, Cys269/Cys288, and Cys289/Cys294. N-linked (GlcNAc...) asparagine glycans are attached at residues Asn184, Asn194, Asn222, Asn255, Asn283, and Asn290. The GPI-anchor amidated glycine moiety is linked to residue Gly299. Positions Gly300–Thr328 are cleaved as a propeptide — removed in mature form.

As to quaternary structure, monomer. Interacts (via the UPAR/Ly6 domains) with SRPX2. Interacts with MRC2. Interacts with SORL1 (via N-terminal ectodomain); this interaction decreases PLAUR internalization. The ternary complex composed of PLAUR-PLAU-SERPINE1 also interacts with SORL1. Interacts with CD82; this interaction prevents PLAUR from binding to its high affinity ligand PLAU.

It localises to the cell membrane. The protein resides in the secreted. Its function is as follows. Acts as a receptor for urokinase plasminogen activator. Plays a role in localizing and promoting plasmin formation. Mediates the proteolysis-independent signal transduction activation effects of U-PA. This chain is Urokinase plasminogen activator surface receptor (Plaur), found in Rattus norvegicus (Rat).